We begin with the raw amino-acid sequence, 258 residues long: Synapse differentiation-inducing gene protein 1 (258 aa).

Residues 1–181 lie on the Cytoplasmic side of the membrane; it reads MDGIIEQKSM…NFLMMPPRDH (181 aa). S137 carries the post-translational modification Phosphoserine. The chain crosses the membrane as a helical span at residues 182-202; the sequence is LGLSVFSMLCCFWPLGIAAFY. Topologically, residues 203–228 are extracellular; it reads LSHETNKAVAKGDLHQASTSSRRALF. The helical intramembrane region spans 229 to 249; it reads LAVLSITIGTGVYVGVAVALI. Over 250 to 258 the chain is Extracellular; it reads AYLSKNNHL.

This sequence belongs to the CD225/Dispanin family. As to quaternary structure, homodimer. Interacts with GRIA1 and GRIA2.

The protein resides in the cell membrane. Its subcellular location is the early endosome membrane. The protein localises to the postsynaptic density membrane. It is found in the synapse. It localises to the cell projection. The protein resides in the dendrite. Its subcellular location is the dendritic spine. Functionally, may regulate AMPA receptor content at nascent synapses, and have a role in postsynaptic development and maturation. In Macaca fascicularis (Crab-eating macaque), this protein is Synapse differentiation-inducing gene protein 1 (SYNDIG1).